The following is a 654-amino-acid chain: Insulin receptor substrate 1 (654 aa).

In terms of domain architecture, PH spans 3-107 (DIKKCGYLRK…WYQAILEVQA (105 aa)). Tyr36 bears the Phosphotyrosine mark. Residues 126–230 (FREVWQVSVR…EAMKSLSEEF (105 aa)) enclose the IRS-type PTB domain. Residues 228 to 329 (EEFRPRTKSQ…EYGSSPGVLE (102 aa)) form a disordered region. The segment covering 235 to 245 (KSQSLSSTPIS) has biased composition (polar residues). Phosphoserine is present on Ser276. Residues 307-321 (NESSADYGSASSDEY) are compositionally biased toward polar residues. Tyr345 is subject to Phosphotyrosine; by INSR. 6 short sequence motifs (YXXM motif) span residues 345–348 (YISM), 384–387 (YAMM), 398–401 (YMPM), 411–414 (YMPM), 430–433 (YVMM), and 466–469 (YMNM). Phosphotyrosine; by INSR is present on residues Tyr398 and Tyr411. Tyr430 is modified (phosphotyrosine). 2 disordered regions span residues 473 to 494 (SRSA…GGPC) and 507 to 532 (YKME…VNAG). The span at 514-524 (SARASCSSSSD) shows a compositional bias: low complexity. A Phosphotyrosine; by INSR modification is found at Tyr563.

As to quaternary structure, interacts with the NPXY motif of tyrosine-phosphorylated igf1r and insr via the PTB domain. Binds to phosphatidylinositol 3-kinase p85 subunit via the phosphorylated YXXM motifs.

Functionally, may mediate the control of various cellular processes by insulin. When phosphorylated by the insulin receptor binds specifically to various cellular proteins containing SH2 domains such as phosphatidylinositol 3-kinase p85 subunit or grb2. Activates phosphatidylinositol 3-kinase when bound to the regulatory p85 subunit. The polypeptide is Insulin receptor substrate 1 (Xenopus tropicalis (Western clawed frog)).